The sequence spans 222 residues: MSDICDANKLKHRFRGYFPVVIDVETAGFNSQTDALLEIAVTLLKMDDEGLLGIDKTLHFHIEPFEGANLEPEALAFNGIDPTNPLRGAVSEKDAFLEIFKAVKKAQKASDCHRSIIVAHNAAFDHGFVSKAIERCDLKRSPFHPFATFDTATLAGLAIGHTVLAKACIMAGIPFDNKEAHSALYDTERTAELFCYIVNRWKTLGGWPLLATSESEDMDSEE.

One can recognise an Exonuclease domain in the interval 20–194 (VVIDVETAGF…YDTERTAELF (175 aa)). 4 residues coordinate Mg(2+): aspartate 23, glutamate 25, histidine 181, and aspartate 186. The Proton donor/acceptor role is filled by histidine 181.

Belongs to the RNase T family. In terms of assembly, homodimer. Mg(2+) serves as cofactor.

Functionally, trims short 3' overhangs of a variety of RNA species, leaving a one or two nucleotide 3' overhang. Responsible for the end-turnover of tRNA: specifically removes the terminal AMP residue from uncharged tRNA (tRNA-C-C-A). Also appears to be involved in tRNA biosynthesis. The polypeptide is Ribonuclease T (Shewanella oneidensis (strain ATCC 700550 / JCM 31522 / CIP 106686 / LMG 19005 / NCIMB 14063 / MR-1)).